Reading from the N-terminus, the 234-residue chain is MQHFWVVGTDTDVGKTIVTTLLMCQLQRLGLEIIPFKPVQTGEIYDNLHSYYADTAMYEKYSLQVLNKEHMNGYSFKEAASPHFAAQLEGQQIDVENLLQRIQFLQESYDVVIAEGAGGLFVPLDVQQSITLLDVIVSSKLPVVLVTRTTLGTINHTLLTMEALQSRQIDVLGIVFNGDTGSMMEQDNIHTILQYHPLPYAIIPRLQDISELANINITHTTLFERLYGNDPRNN.

12–17 (DVGKTI) contributes to the ATP binding site. A Mg(2+)-binding site is contributed by threonine 16. Lysine 37 is a catalytic residue. Threonine 41 serves as a coordination point for substrate. ATP-binding positions include aspartate 54 and 115 to 118 (EGAG). Residues aspartate 54 and glutamate 115 each coordinate Mg(2+).

Belongs to the dethiobiotin synthetase family. Homodimer. It depends on Mg(2+) as a cofactor.

It localises to the cytoplasm. It catalyses the reaction (7R,8S)-7,8-diammoniononanoate + CO2 + ATP = (4R,5S)-dethiobiotin + ADP + phosphate + 3 H(+). It functions in the pathway cofactor biosynthesis; biotin biosynthesis; biotin from 7,8-diaminononanoate: step 1/2. Functionally, catalyzes a mechanistically unusual reaction, the ATP-dependent insertion of CO2 between the N7 and N8 nitrogen atoms of 7,8-diaminopelargonic acid (DAPA, also called 7,8-diammoniononanoate) to form a ureido ring. This Lysinibacillus sphaericus (strain C3-41) protein is ATP-dependent dethiobiotin synthetase BioD.